The following is a 40-amino-acid chain: Antimicrobial peptide 1 (40 aa).

A Chitin-binding type-1 domain is found at 1 to 40; the sequence is AQCGAQGGGATCPGGLCCSQWGWCGSTPKYCGAGCQSNCK. 4 cysteine pairs are disulfide-bonded: C3–C18, C12–C24, C17–C31, and C35–C39.

In terms of processing, not glycosylated.

Antimicrobial peptide active against plant pathogenic fungi and Gram-negative and -positive bacteria. This is Antimicrobial peptide 1 from Fagopyrum esculentum (Common buckwheat).